We begin with the raw amino-acid sequence, 173 residues long: Putative metal-dependent hydrolase BCG9842_B2589 (173 aa).

Histidine 65, histidine 156, and histidine 160 together coordinate Zn(2+).

This sequence belongs to the metal hydrolase YfiT family. As to quaternary structure, homodimer. Zn(2+) serves as cofactor.

It localises to the cytoplasm. In terms of biological role, possible metal-dependent hydrolase. In Bacillus cereus (strain G9842), this protein is Putative metal-dependent hydrolase BCG9842_B2589.